The following is a 344-amino-acid chain: Dihydroorotate dehydrogenase (quinone) (344 aa).

Residues 64-68 (AGLDK) and T88 each bind FMN. A substrate-binding site is contributed by K68. Position 113–117 (113–117 (NRMGF)) interacts with substrate. N144 and N177 together coordinate FMN. N177 contacts substrate. S180 acts as the Nucleophile in catalysis. Position 182 (N182) interacts with substrate. Positions 222 and 250 each coordinate FMN. Residue 251 to 252 (NT) coordinates substrate. Residues G273, G302, and 323 to 324 (YS) each bind FMN.

Belongs to the dihydroorotate dehydrogenase family. Type 2 subfamily. Monomer. FMN is required as a cofactor.

The protein resides in the cell membrane. The enzyme catalyses (S)-dihydroorotate + a quinone = orotate + a quinol. It functions in the pathway pyrimidine metabolism; UMP biosynthesis via de novo pathway; orotate from (S)-dihydroorotate (quinone route): step 1/1. Functionally, catalyzes the conversion of dihydroorotate to orotate with quinone as electron acceptor. The sequence is that of Dihydroorotate dehydrogenase (quinone) from Polynucleobacter necessarius subsp. necessarius (strain STIR1).